The primary structure comprises 485 residues: Sphingosine kinase 1 (485 aa).

One can recognise a DAGKc domain in the interval 116 to 258 (GRPKKLLVFV…LDVATISQGT (143 aa)). Residues 126-128 (NPF) and threonine 158 each bind ATP. 183 to 186 (SGDG) lines the substrate pocket. The active-site Proton donor/acceptor is the aspartate 185. Residues glutamate 190 and 215-217 (GSG) contribute to the ATP site. Residue aspartate 276 participates in substrate binding. ATP is bound by residues arginine 283, arginine 289, and 446 to 448 (DGE).

The cofactor is Mg(2+). As to expression, highly expressed in stems and flowers and at lower levels in roots, leaves and siliques.

It is found in the vacuole membrane. The enzyme catalyses a sphingoid base + ATP = a sphingoid 1-phosphate + ADP + H(+). Activated by phosphatidic acid (PA). Binding with PA stimulates the activity by promoting the binding of substrate to the catalytic site. Its function is as follows. Involved in the production of sphingolipid metabolites. Phosphorylates sphingosine and various sphingoid long-chain base (LCB) products, such as phytosphingosine (PHS, 4-hydroxysphinganine), 4-hydroxy-8-sphingenine, 4,8-sphingadienine, D-erythro-dihydrosphingosine and D,L-threo-dihydrosphingosine. Is required for abscisic acid (ABA) signaling that mediates stomatal closure, inhibition of seed germination and root elongation. May function upstream of PLDALPHA1 and phosphatidic acid (PA) in an amplification response to ABA that mediates stomatal closure. This chain is Sphingosine kinase 1 (SPHK1), found in Arabidopsis thaliana (Mouse-ear cress).